We begin with the raw amino-acid sequence, 1200 residues long: MSLQFVLGPAKMDHRRTMVAQLVATLMAKPQDQFFYLVPNHIKFDTEVDVLNRLAQAFGQPDLYAQTQVQVFSFTRLAWYLMKNEAAYQVPRLSAAGIDMLLYRILQRHADELRLFGGEISQTGFVTQLAREINELQTANLQPEDVVQLAANAQAGDLQAKLHDLAIVYKDFVAATADKYLKPADILVQLNAYLRRQDLHGTHVYVELAGFAQLPAQEQGIVTTMLEQGADVTISLMLDHKVVDRAPENGTLFYQSGRLYYRLYQYARIRQIPVSQDIYAETPRVAPGLVALDDFWRGQPQAATGYEEPNTNVHLFRTDSRQTELAQVGRMIRAMVAKKHADPADDYHYRDFLIMTRHLDAYQTMLAPTFHELEIPYFVDLQRSMADHPLVELINALFDIDAQQYQYRDVMRVLKTELLMPNINGQPMDRQAYRQAVDLTENFILKSGYHGQRWVQREDWQYFQLTEGDAGVETDQNAEISRQINLIHHFVAETLPPFFKKMRQAPDGKAAVTLLVNFLTSQGVTDQLLAWRDQALDRQDVRAAAEPEQTWQTFCGMLDEYVTILGAEPFEITDFLALLQAGFEGASYSQIPSTLDQVLISESGMVQSQDHKVVFMVGATDLVMPDRIMTNNLLSDVDKENLQLTLSSLDGDHYLNDSAVVQLGDESCLNYLAFLSARRHLFFSAPLKDDQETDLNWSNYVRRIQRQFNLREHTYLGTPDPTNADARPFVGTKRRTISHVIQVYRDVLTTNTDRNRVGAPLQPAPVWVWLRQQLTRDPQFGELARQLMAGLSYRNQPVKLTPASVEALYGHQIYTSISKLEEFYRNQYAYFLKYGLKLRERDVFELSAASTGEFFHAVLDGLIKALRSDQIPLAQASDQQLGQYLETVTRQILDQPQFTILTSSNRMAYLQRQLINTVRQIAFAIRNQSKLSAAEPKQTEILFGNVGKEHGLKALDFQIDATHSVHVRGKIDRLDQIQVADQSYLGIVDYKSSQHKFDFQEAYYGLAMQMLTYLDAVLHNEQALVGSDQAAVKLAGALYMHIQNPTLKPKDIQGGFEAALLKKNKYKGILLDDPQLLEHLDSELQQGNGTSKVYPFARKKDGSYSGGRAASLVTNDQLERLLQHNSQLIIAAAEAIFAGEIQLNPIRLNDKTTALQYSPYLSIMQFDAMLAENAYRDLPPLSAKQVLDLLKTQKGGENHE.

Belongs to the helicase family. AddB/RexB type 2 subfamily. As to quaternary structure, heterodimer of AddA and RexB. The cofactor is Mg(2+).

The heterodimer acts as both an ATP-dependent DNA helicase and an ATP-dependent, dual-direction single-stranded exonuclease. Recognizes the chi site generating a DNA molecule suitable for the initiation of homologous recombination. This subunit has 5' -&gt; 3' nuclease activity but not helicase activity. The polypeptide is ATP-dependent helicase/deoxyribonuclease subunit B (Lactiplantibacillus plantarum (strain ATCC BAA-793 / NCIMB 8826 / WCFS1) (Lactobacillus plantarum)).